The chain runs to 626 residues: Phosphomethylpyrimidine synthase (626 aa).

The interval 1–22 is disordered; it reads MTKQEKAINLSESAQVDQQSVQ. The span at 10-22 shows a compositional bias: polar residues; it reads LSESAQVDQQSVQ. Substrate-binding positions include Asn-232, Met-261, Tyr-290, His-326, 346–348, 387–390, and Glu-426; these read SRG and DGLR. A Zn(2+)-binding site is contributed by His-430. Tyr-453 lines the substrate pocket. His-494 is a Zn(2+) binding site. 3 residues coordinate [4Fe-4S] cluster: Cys-574, Cys-577, and Cys-582.

The protein belongs to the ThiC family. As to quaternary structure, homodimer. It depends on [4Fe-4S] cluster as a cofactor.

The catalysed reaction is 5-amino-1-(5-phospho-beta-D-ribosyl)imidazole + S-adenosyl-L-methionine = 4-amino-2-methyl-5-(phosphooxymethyl)pyrimidine + CO + 5'-deoxyadenosine + formate + L-methionine + 3 H(+). Its pathway is cofactor biosynthesis; thiamine diphosphate biosynthesis. Its function is as follows. Catalyzes the synthesis of the hydroxymethylpyrimidine phosphate (HMP-P) moiety of thiamine from aminoimidazole ribotide (AIR) in a radical S-adenosyl-L-methionine (SAM)-dependent reaction. This chain is Phosphomethylpyrimidine synthase, found in Pseudomonas putida (strain ATCC 700007 / DSM 6899 / JCM 31910 / BCRC 17059 / LMG 24140 / F1).